The primary structure comprises 486 residues: Zinc transporter 6 (486 aa).

Topologically, residues 1–60 (MVALDVLGITDSDAPVYRQKQEADTLVLGTIHPFRKAHRSVLGKLAQEFRLVTSDRRSWK) are cytoplasmic. Residues 61-81 (ILLFGVLNVVCTGCLLMWCSS) traverse the membrane as a helical segment. The Extracellular portion of the chain corresponds to 82-91 (TNSMALTAYT). The helical transmembrane segment at 92-112 (YLTIFDLFSLITCLLSLWVTM) threads the bilayer. The Cytoplasmic segment spans residues 113–125 (KKPSQIYSFGFQR). Residues 126-146 (FEVLAVFSSTVLVQLGSLFIL) form a helical membrane-spanning segment. The Extracellular segment spans residues 147–161 (KESVERFVEQPEVHT). Residues 162–182 (GRLLVGTFVALFFNLLTLLSV) traverse the membrane as a helical segment. The Cytoplasmic segment spans residues 183–227 (KNKPFVFVSEAASTSWLQEHVADLSRSLCGLIPALSSFLLPRMNP). Residues 228–248 (FVLINLAGAFALGITYMLIEI) form a helical membrane-spanning segment. The Extracellular portion of the chain corresponds to 249–255 (NNYNAMD). Residues 256-276 (TASAVAIALMTFGTMYPMSVY) traverse the membrane as a helical segment. At 277–486 (SGKVLLQTTP…SGTYTGPPRP (210 aa)) the chain is on the cytoplasmic side. Residues 394 to 411 (PSRAQGSEPTPATSTPAK) show a composition bias toward low complexity. Positions 394 to 425 (PSRAQGSEPTPATSTPAKPSSPPPEFSFHTPG) are disordered.

Belongs to the cation diffusion facilitator (CDF) transporter (TC 2.A.4) family. SLC30A subfamily. In terms of assembly, heterodimer with SLC30A5; form a functional zinc ion transmembrane transporter.

It localises to the golgi apparatus. The protein localises to the trans-Golgi network membrane. Functionally, has probably no intrinsic transporter activity but together with SLC30A5 forms a functional zinc ion:proton antiporter heterodimer, mediating zinc entry into the lumen of organelles along the secretory pathway. As part of that zinc ion:proton antiporter, contributes to zinc ion homeostasis within the early secretory pathway and regulates the activation and folding of enzymes like alkaline phosphatases and enzymes involved in phosphatidylinositol glycan anchor biosynthesis. This is Zinc transporter 6 (slc30a6) from Danio rerio (Zebrafish).